A 541-amino-acid polypeptide reads, in one-letter code: Nuclear receptor subfamily 5 group A member 2 (541 aa).

The segment covering 1–10 has biased composition (polar residues); sequence MSSNSDTGDL. The interval 1–35 is disordered; that stretch reads MSSNSDTGDLQESLKHGLTPIGAGLPDRHGSPIPA. A DNA-binding region (nuclear receptor) is located at residues 83-154; that stretch reads EELCPVCGDK…KCLSVGMKLE (72 aa). The Zn(2+) site is built by Cys-86, Cys-89, Cys-103, Cys-106, Cys-122, Cys-128, Cys-138, and Cys-141. 2 consecutive NR C4-type zinc fingers follow at residues 86-106 and 122-146; these read CPVC…CESC and CIEN…FQKC. The C-terminal extension (CTE) stretch occupies residues 152–167; that stretch reads KLEAVRADRMRGGRNK. An FTZ-F1 box motif is present at residues 168–187; it reads FGPMYKRDRALKQQKKALIR. A Glycyl lysine isopeptide (Lys-Gly) (interchain with G-Cter in SUMO1) cross-link involves residue Lys-270. An NR LBD domain is found at 300–539; the sequence is SIPHLILELL…NLLIEMLHAK (240 aa). A phospholipid derivative contacts are provided by residues 421–424, Tyr-516, and Lys-520; that span reads GATL. An AF-2 region spans residues 528–539; it reads YNNLLIEMLHAK.

It belongs to the nuclear hormone receptor family. NR5 subfamily. As to quaternary structure, monomer; Binds DNA as a monomer. Interacts with nuclear receptor corepressors NR0B1 and NR0B2; repressing NR5A2 nuclear receptor activity. Interacts with nuclear receptor coactivators CTNNB1, PPARGC1A and NCOA2; interaction takes place following ligand-binding and promotes target gene activation. Interacts (when sumoylated) with GPS2; interaction with GPS2 onto hepatic acute phase protein promoters prevents N-Cor corepressor complex dissociation. Interacts with HNF1A. Interacts with GRIP1. Sumoylated by SUMO1 at Lys-270 during the hepatic acute phase response, leading to promote interaction with GPS2 and prevent N-Cor corepressor complex dissociation. Abundantly expressed in pancreas, less in liver, very low levels in heart and lung. Expressed in the Hep-G2 cell line. Isoform 1 and isoform 2 seem to be present in fetal and adult liver and Hep-G2 cells.

The protein resides in the nucleus. It is found in the chromosome. With respect to regulation, activated by synthetic agonists RR-RJW100, SR-RJW100, endo sulfamide compound 6N and GSK8470. Functionally, orphan nuclear receptor that binds DNA as a monomer to the 5'-TCAAGGCCA-3' sequence and controls expression of target genes: regulates key biological processes, such as early embryonic development, cholesterol and bile acid synthesis pathways, as well as liver and pancreas morphogenesis. Ligand-binding causes conformational change which causes recruitment of coactivators, promoting target gene activation. The specific ligand is unknown, but specific phospholipids, such as phosphatidylethanolamine, phosphatidylserine, dilauroyl phosphatidylcholine and diundecanoyl phosphatidylcholine can act as ligand in vitro. Acts as a pioneer transcription factor, which unwraps target DNA from histones and elicits local opening of closed chromatin. Plays a central role during preimplantation stages of embryonic development. Plays a minor role in zygotic genome activation (ZGA) by regulating a small set of two-cell stage genes. Plays a major role in morula development (2-16 cells embryos) by acting as a master regulator at the 8-cell stage, controlling expression of lineage-specifying transcription factors and genes involved in mitosis, telomere maintenance and DNA repair. Zygotic NR5A2 binds to both closed and open chromatin with other transcription factors, often at SINE B1/Alu repeats DNA elements, promoting chromatin accessibility at nearby regulatory regions. Also involved in the epiblast stage of development and embryonic stem cell pluripotency, by promoting expression of POU5F1/OCT4. Regulates other processes later in development, such as formation of connective tissue in lower jaw and middle ear, neural stem cell differentiation, ovarian follicle development and Sertoli cell differentiation. Involved in exocrine pancreas development and acinar cell differentiation. Acts as an essential transcriptional regulator of lipid metabolism. Key regulator of cholesterol 7-alpha-hydroxylase gene (CYP7A) expression in liver. Also acts as a negative regulator of inflammation in different organs, such as, liver and pancreas. Protects against intestinal inflammation via its ability to regulate glucocorticoid production. Plays an anti-inflammatory role during the hepatic acute phase response by acting as a corepressor: inhibits the hepatic acute phase response by preventing dissociation of the N-Cor corepressor complex. Acts as a regulator of immunity by promoting lymphocyte T-cell development, proliferation and effector functions. Also involved in resolution of endoplasmic reticulum stress in the liver. In constrast to isoform 1 and isoform 2, does not induce cholesterol 7-alpha-hydroxylase gene (CYP7A) promoter activity. Its function is as follows. (Microbial infection) Plays a crucial role for hepatitis B virus gene transcription and DNA replication. Mechanistically, synergistically cooperates with HNF1A to up-regulate the activity of one of the critical cis-elements in the hepatitis B virus genome enhancer II (ENII). In Homo sapiens (Human), this protein is Nuclear receptor subfamily 5 group A member 2.